Reading from the N-terminus, the 140-residue chain is Putative pre-16S rRNA nuclease (140 aa).

Belongs to the YqgF nuclease family.

The protein localises to the cytoplasm. Could be a nuclease involved in processing of the 5'-end of pre-16S rRNA. This chain is Putative pre-16S rRNA nuclease, found in Yersinia pseudotuberculosis serotype IB (strain PB1/+).